The following is a 204-amino-acid chain: Urease accessory protein UreG (204 aa).

11–18 (GPVGAGKT) is a GTP binding site.

It belongs to the SIMIBI class G3E GTPase family. UreG subfamily. As to quaternary structure, homodimer. UreD, UreF and UreG form a complex that acts as a GTP-hydrolysis-dependent molecular chaperone, activating the urease apoprotein by helping to assemble the nickel containing metallocenter of UreC. The UreE protein probably delivers the nickel.

The protein localises to the cytoplasm. In terms of biological role, facilitates the functional incorporation of the urease nickel metallocenter. This process requires GTP hydrolysis, probably effectuated by UreG. This Staphylococcus aureus (strain MSSA476) protein is Urease accessory protein UreG.